We begin with the raw amino-acid sequence, 271 residues long: Formamidopyrimidine-DNA glycosylase (271 aa).

The Schiff-base intermediate with DNA role is filled by proline 2. The active-site Proton donor is the glutamate 3. Lysine 58 acts as the Proton donor; for beta-elimination activity in catalysis. Residues histidine 91, arginine 110, and arginine 152 each coordinate DNA. Residues 237-271 form an FPG-type zinc finger; the sequence is WVYGRTGQPCRKCGALVSKTRQGQRSSFFCAQCQK. The Proton donor; for delta-elimination activity role is filled by arginine 261.

It belongs to the FPG family. Monomer. The cofactor is Zn(2+).

The enzyme catalyses Hydrolysis of DNA containing ring-opened 7-methylguanine residues, releasing 2,6-diamino-4-hydroxy-5-(N-methyl)formamidopyrimidine.. It carries out the reaction 2'-deoxyribonucleotide-(2'-deoxyribose 5'-phosphate)-2'-deoxyribonucleotide-DNA = a 3'-end 2'-deoxyribonucleotide-(2,3-dehydro-2,3-deoxyribose 5'-phosphate)-DNA + a 5'-end 5'-phospho-2'-deoxyribonucleoside-DNA + H(+). Functionally, involved in base excision repair of DNA damaged by oxidation or by mutagenic agents. Acts as a DNA glycosylase that recognizes and removes damaged bases. Has a preference for oxidized purines, such as 7,8-dihydro-8-oxoguanine (8-oxoG). Has AP (apurinic/apyrimidinic) lyase activity and introduces nicks in the DNA strand. Cleaves the DNA backbone by beta-delta elimination to generate a single-strand break at the site of the removed base with both 3'- and 5'-phosphates. The protein is Formamidopyrimidine-DNA glycosylase of Nitrosomonas eutropha (strain DSM 101675 / C91 / Nm57).